A 412-amino-acid chain; its full sequence is Poly-beta-1,6-N-acetyl-D-glucosamine synthase (412 aa).

4 helical membrane-spanning segments follow: residues Phe6 to Thr28, Leu290 to Gly312, Ile332 to Ile354, and Leu366 to Phe388.

Belongs to the glycosyltransferase 2 family.

The protein localises to the cell membrane. Functionally, N-acetylglucosaminyltransferase that catalyzes the polymerization of single monomer units of UDP-N-acetylglucosamine to produce the linear homomer poly-beta-1,6-N-acetyl-D-glucosamine (PNAG, also referred to as PIA), a biofilm adhesin polysaccharide. Requires IcaD for full activity. The sequence is that of Poly-beta-1,6-N-acetyl-D-glucosamine synthase (icaA) from Staphylococcus aureus (strain MSSA476).